The primary structure comprises 637 residues: tRNA uridine 5-carboxymethylaminomethyl modification enzyme MnmG (637 aa).

18 to 23 (GAGHAG) contributes to the FAD binding site. Residue 281–295 (GPRYCPSIEDKIVRF) coordinates NAD(+).

It belongs to the MnmG family. As to quaternary structure, homodimer. Heterotetramer of two MnmE and two MnmG subunits. FAD serves as cofactor.

It localises to the cytoplasm. Functionally, NAD-binding protein involved in the addition of a carboxymethylaminomethyl (cmnm) group at the wobble position (U34) of certain tRNAs, forming tRNA-cmnm(5)s(2)U34. The chain is tRNA uridine 5-carboxymethylaminomethyl modification enzyme MnmG from Ligilactobacillus salivarius (strain UCC118) (Lactobacillus salivarius).